Reading from the N-terminus, the 441-residue chain is MRTVCLVKNQQPLGATIKRHEITGDILVARVIHGGLVERNGLLYAGDKLVEVNGVPVEGLDPEQVIHILAMSCGTIMFKVIPVSAPPVSSQTTVYVRAMIDYWPQEDPDIPCMDAGLPFLKGDILQIVDQSDALWWQARKISDIAICAGLIPSNHLLKRKQREFWWSQPYQPHTCLKSTRSKEEFVGDGQQFFIAGFRQQHANMRCTCSCYSAVGAPYEEVVRYQRQPADKHRLIVLVGPSGVGVNELRRQLIGCNPSCFQSAVPHTTRSPKSYEMDGREYHYVSRETFESLMYGHRMLEFGEYKGHLYGTSVNAVLAVLDEGKICVMDLEPQDIQLARTRELKPYVIFIKPPSMSSMRHSRRNAKIITDYFVDMKFKDEDLQEMEELAQKMESQFGQFFDHVIVNDNLQDARAQLLSAIQKAEEELQWVPEAWVSPGAES.

The PDZ domain maps to 1-84 (MRTVCLVKNQ…TIMFKVIPVS (84 aa)). Positions 91–161 (QTTVYVRAMI…PSNHLLKRKQ (71 aa)) constitute an SH3 domain. Residues 232–421 (HRLIVLVGPS…ARAQLLSAIQ (190 aa)) enclose the Guanylate kinase-like domain. Residues 373 to 430 (VDMKFKDEDLQEMEELAQKMESQFGQFFDHVIVNDNLQDARAQLLSAIQKAEEELQWV) are a coiled coil.

The protein belongs to the MAGUK family. As to quaternary structure, interacts with MPDZ. May interact with GRIA2. Forms a complex with CRB1 and PALS1. Interacts with FASLG. In terms of tissue distribution, highly expressed in brain and detected in lung, and bone (at protein level). Also expressed in intestine and spleen.

It localises to the cytoplasm. Functionally, may play a role in retinal photoreceptors development. The chain is MAGUK p55 subfamily member 4 (Mpp4) from Rattus norvegicus (Rat).